The chain runs to 450 residues: TNF receptor-associated factor family protein DDB_G0273433/DDB_G0273509 (450 aa).

An RING-type; degenerate zinc finger spans residues 26–73 (CQICFNSVIDFKKETLSFDVLQCRNGHISCHECWNRQLSIKQECPSCK). 2 consecutive TRAF-type zinc fingers follow at residues 129 to 185 (HHLK…KKLN) and 186 to 243 (KHIE…SQLS). A coiled-coil region spans residues 257–297 (QNVMDLHKLQLDECNQDYRKLEKQNRDLEKRLFYLESTVNS). Residues 319–439 (VYKGKWVINN…NNSLTISISI (121 aa)) enclose the MATH domain.

Belongs to the TNF receptor-associated factor family. A subfamily.

Its subcellular location is the cytoplasm. In terms of biological role, probable adapter protein and signal transducer that links members of the tumor necrosis factor receptor family to different signaling pathways by association with the receptor cytoplasmic domain and kinases. The chain is TNF receptor-associated factor family protein DDB_G0273433/DDB_G0273509 from Dictyostelium discoideum (Social amoeba).